Consider the following 436-residue polypeptide: UDP-N-acetylmuramate--L-alanine ligase (436 aa).

Gly-108 to Ser-114 lines the ATP pocket.

Belongs to the MurCDEF family.

It localises to the cytoplasm. The catalysed reaction is UDP-N-acetyl-alpha-D-muramate + L-alanine + ATP = UDP-N-acetyl-alpha-D-muramoyl-L-alanine + ADP + phosphate + H(+). Its pathway is cell wall biogenesis; peptidoglycan biosynthesis. Functionally, cell wall formation. This Bacillus cereus (strain AH187) protein is UDP-N-acetylmuramate--L-alanine ligase.